We begin with the raw amino-acid sequence, 171 residues long: Ribosome maturation factor RimM (171 aa).

The PRC barrel domain maps to 98–170; it reads EGEFYLHQII…AVQVSVPEGL (73 aa).

It belongs to the RimM family. In terms of assembly, binds ribosomal protein uS19.

The protein localises to the cytoplasm. An accessory protein needed during the final step in the assembly of 30S ribosomal subunit, possibly for assembly of the head region. Essential for efficient processing of 16S rRNA. May be needed both before and after RbfA during the maturation of 16S rRNA. It has affinity for free ribosomal 30S subunits but not for 70S ribosomes. In Pediococcus pentosaceus (strain ATCC 25745 / CCUG 21536 / LMG 10740 / 183-1w), this protein is Ribosome maturation factor RimM.